Here is a 68-residue protein sequence, read N- to C-terminus: MLCLPVFIILLLLASPAAPKSLETRIQNDLIRAGLTDADLKTEKGFLSGLLNVAGSVCCKVDTSCCSN.

Residues 1-19 (MLCLPVFIILLLLASPAAP) form the signal peptide. A propeptide spanning residues 20-54 (KSLETRIQNDLIRAGLTDADLKTEKGFLSGLLNVA) is cleaved from the precursor.

The protein belongs to the conotoxin T superfamily. Post-translationally, contains 2 disulfide bonds that can be either 'C1-C3, C2-C4' or 'C1-C4, C2-C3', since these disulfide connectivities have been observed for conotoxins with cysteine framework V (for examples, see AC P0DQQ7 and AC P81755). As to expression, expressed by the venom duct.

The protein resides in the secreted. The protein is Conotoxin Lt5.2 of Conus litteratus (Lettered cone).